The primary structure comprises 381 residues: Cytochrome b (381 aa).

Transmembrane regions (helical) follow at residues 34–54 (FGSL…FLAM), 78–99 (WLIR…YLHI), 114–134 (WNIG…GYVL), and 179–199 (FFAF…LHFL). 2 residues coordinate heme b: His-84 and His-98. Heme b contacts are provided by His-183 and His-197. His-202 contacts a ubiquinone. 4 consecutive transmembrane segments (helical) span residues 227-247 (YKDI…VLFL), 289-309 (LGGV…PFLH), 321-341 (LTQL…WIGG), and 348-368 (FIFI…IITP).

It belongs to the cytochrome b family. The cytochrome bc1 complex contains 3 respiratory subunits (MT-CYB, CYC1 and UQCRFS1), 2 core proteins (UQCRC1 and UQCRC2) and probably 6 low-molecular weight proteins. The cofactor is heme b.

Its subcellular location is the mitochondrion inner membrane. Component of the ubiquinol-cytochrome c reductase complex (complex III or cytochrome b-c1 complex) that is part of the mitochondrial respiratory chain. The b-c1 complex mediates electron transfer from ubiquinol to cytochrome c. Contributes to the generation of a proton gradient across the mitochondrial membrane that is then used for ATP synthesis. The protein is Cytochrome b (mt-cyb) of Heterodontus francisci (Horn shark).